The following is a 367-amino-acid chain: tRNA-specific 2-thiouridylase MnmA (367 aa).

ATP is bound by residues 9–16 (GLSGGVDS) and Met-35. Positions 95–97 (NPD) are interaction with target base in tRNA. Cys-100 (nucleophile) is an active-site residue. Cys-100 and Cys-196 are oxidised to a cystine. Gly-124 serves as a coordination point for ATP. The tract at residues 146–148 (KDQ) is interaction with tRNA. The active-site Cysteine persulfide intermediate is the Cys-196. An interaction with tRNA region spans residues 308–309 (RY).

It belongs to the MnmA/TRMU family.

The protein localises to the cytoplasm. The catalysed reaction is S-sulfanyl-L-cysteinyl-[protein] + uridine(34) in tRNA + AH2 + ATP = 2-thiouridine(34) in tRNA + L-cysteinyl-[protein] + A + AMP + diphosphate + H(+). Catalyzes the 2-thiolation of uridine at the wobble position (U34) of tRNA, leading to the formation of s(2)U34. In Nitrosococcus oceani (strain ATCC 19707 / BCRC 17464 / JCM 30415 / NCIMB 11848 / C-107), this protein is tRNA-specific 2-thiouridylase MnmA.